The sequence spans 243 residues: MIKILIPTAKEMKVCQNIARPKLSAQTQIIIDYFSTLTVSDLEDIYRINTSAARCEAQRWQDFKCKQLTLNPAIKLFNGLMYRNIKRHNLSISEAQFMENSVFITSALYGIIPAMTLISPHRLDFNTKIKINNNSLKVFWRENYDTFMQSDDIMVSLLSNEFETVFSPKERQKLIHLNFIEDRDGQLKTHSTISKKARGKCLTAMMENNCQTLEHLKQLRFDGFCYDNELSDSKQLTFVKKQT.

It belongs to the UPF0246 family.

This Streptococcus agalactiae serotype Ia (strain ATCC 27591 / A909 / CDC SS700) protein is UPF0246 protein SAK_2020.